The primary structure comprises 265 residues: Glutamate racemase (265 aa).

Substrate-binding positions include 12 to 13 (DS) and 44 to 45 (YG). Cysteine 75 (proton donor/acceptor) is an active-site residue. 76-77 (NT) is a binding site for substrate. Cysteine 183 functions as the Proton donor/acceptor in the catalytic mechanism. Residue 184–185 (TH) coordinates substrate.

Belongs to the aspartate/glutamate racemases family.

It carries out the reaction L-glutamate = D-glutamate. The protein operates within cell wall biogenesis; peptidoglycan biosynthesis. Functionally, provides the (R)-glutamate required for cell wall biosynthesis. The protein is Glutamate racemase of Carboxydothermus hydrogenoformans (strain ATCC BAA-161 / DSM 6008 / Z-2901).